Reading from the N-terminus, the 150-residue chain is Large ribosomal subunit protein bL9 (150 aa).

The protein belongs to the bacterial ribosomal protein bL9 family.

Its function is as follows. Binds to the 23S rRNA. The chain is Large ribosomal subunit protein bL9 from Shewanella baltica (strain OS223).